The sequence spans 290 residues: 4-hydroxy-tetrahydrodipicolinate synthase (290 aa).

Thr-45 is a pyruvate binding site. The Proton donor/acceptor role is filled by Tyr-133. Residue Lys-161 is the Schiff-base intermediate with substrate of the active site. Ile-202 provides a ligand contact to pyruvate.

Belongs to the DapA family. As to quaternary structure, homotetramer; dimer of dimers.

The protein localises to the cytoplasm. The catalysed reaction is L-aspartate 4-semialdehyde + pyruvate = (2S,4S)-4-hydroxy-2,3,4,5-tetrahydrodipicolinate + H2O + H(+). Its pathway is amino-acid biosynthesis; L-lysine biosynthesis via DAP pathway; (S)-tetrahydrodipicolinate from L-aspartate: step 3/4. Catalyzes the condensation of (S)-aspartate-beta-semialdehyde [(S)-ASA] and pyruvate to 4-hydroxy-tetrahydrodipicolinate (HTPA). This Alkalilimnicola ehrlichii (strain ATCC BAA-1101 / DSM 17681 / MLHE-1) protein is 4-hydroxy-tetrahydrodipicolinate synthase.